The following is a 206-amino-acid chain: 2,3-bisphosphoglycerate-dependent phosphoglycerate mutase (206 aa).

Residues 9–16, 22–23, arginine 61, 88–91, lysine 99, 115–116, and 159–160 each bind substrate; these read RHGQSEWN, TG, ERDY, RR, and GN. The active-site Tele-phosphohistidine intermediate is histidine 10. Catalysis depends on glutamate 88, which acts as the Proton donor/acceptor.

It belongs to the phosphoglycerate mutase family. BPG-dependent PGAM subfamily. As to quaternary structure, homodimer.

The enzyme catalyses (2R)-2-phosphoglycerate = (2R)-3-phosphoglycerate. It participates in carbohydrate degradation; glycolysis; pyruvate from D-glyceraldehyde 3-phosphate: step 3/5. Its function is as follows. Catalyzes the interconversion of 2-phosphoglycerate and 3-phosphoglycerate. This Mesorhizobium japonicum (strain LMG 29417 / CECT 9101 / MAFF 303099) (Mesorhizobium loti (strain MAFF 303099)) protein is 2,3-bisphosphoglycerate-dependent phosphoglycerate mutase.